Here is a 129-residue protein sequence, read N- to C-terminus: MSGRGKQGGKVRAKAKSRSSRAGLQFPVGRVHRLLRKGNYAERVGAGAPVYLAAVLEYLTAEILELAGNAARDNKKTRIIPRHLQLAIRNDEELNKLLGRVTIAQGGVLPNIQAVLLPKKTESQKVKSK.

The interval M1–A22 is disordered. N6-acetyllysine is present on residues K6 and K10. A compositionally biased stretch (basic residues) spans Q7 to S19. At K10 the chain carries N6-lactoyllysine; alternate. N5-methylglutamine is present on Q105. T121 carries the phosphothreonine; by DCAF1 modification.

Belongs to the histone H2A family. As to quaternary structure, the nucleosome is a histone octamer containing two molecules each of H2A, H2B, H3 and H4 assembled in one H3-H4 heterotetramer and two H2A-H2B heterodimers. The octamer wraps approximately 147 bp of DNA. Monoubiquitination of Lys-120 (H2AXK119ub) gives a specific tag for epigenetic transcriptional repression. Following DNA double-strand breaks (DSBs), it is ubiquitinated through 'Lys-63' linkage of ubiquitin moieties. In terms of processing, glutamine methylation at Gln-105 (H2AQ104me) by FBL is specifically dedicated to polymerase I. It is present at 35S ribosomal DNA locus and impairs binding of the FACT complex. Post-translationally, phosphorylation on Ser-2 (H2AS1ph) is enhanced during mitosis. Phosphorylation on Ser-2 by RPS6KA5/MSK1 directly represses transcription. Acetylation of H3 inhibits Ser-2 phosphorylation by RPS6KA5/MSK1. Phosphorylation at Thr-121 (H2AT120ph) by DCAF1 is present in the regulatory region of many tumor suppresor genes and down-regulates their transcription.

Its subcellular location is the nucleus. The protein resides in the chromosome. In terms of biological role, core component of nucleosome. Nucleosomes wrap and compact DNA into chromatin, limiting DNA accessibility to the cellular machineries which require DNA as a template. Histones thereby play a central role in transcription regulation, DNA repair, DNA replication and chromosomal stability. DNA accessibility is regulated via a complex set of post-translational modifications of histones, also called histone code, and nucleosome remodeling. The sequence is that of Histone H2A.J from Mus musculus (Mouse).